Reading from the N-terminus, the 377-residue chain is SH2/SH3 adapter protein Nck1 (377 aa).

The residue at position 2 (Ala-2) is an N-acetylalanine. An SH3 1 domain is found at 2–61 (AEEVVVVAKFDYVAQQEQELDIKKNERLWLLDDSKSWWRVRNSMNKTGFVPSNYVERKNS). Phosphoserine occurs at positions 85, 91, and 96. Phosphotyrosine is present on Tyr-105. One can recognise an SH3 2 domain in the interval 106 to 165 (DLNMPAFVKFNYMAEREDELSLIKGTKVIVMEKCSDGWWRGSYNGQIGWFPSNYVTEEGD). Phosphoserine is present on Ser-166. The SH3 3 domain occupies 190 to 252 (QVLHVVQALY…PKNYVTIMQN (63 aa)). Residues 282–376 (WYYGKVTRHQ…GEKLYLVKHL (95 aa)) form the SH2 domain.

In terms of assembly, interacts (via SH2 domain and SH3 domain 2) with EGFR. Interacts with PAK1 and SOS1. Interacts (via SH3 domains) with PKN2. Associates with BLNK, PLCG1, VAV1 and NCK1 in a B-cell antigen receptor-dependent fashion. Interacts with SOCS7. This interaction is required for nuclear import. Part of a complex containing PPP1R15B, PP1 and NCK1. Interacts with RALGPS1. Interacts with CAV2 (tyrosine phosphorylated form). Interacts with ADAM15. Interacts with FASLG. Directly interacts with RASA1. Interacts with isoform 4 of MINK1. Interacts with FLT1 (tyrosine phosphorylated). Interacts with KDR (tyrosine phosphorylated). Interacts (via SH2 domain) with EPHB1; activates the JUN cascade to regulate cell adhesion. Interacts with EPHA2. Interacts (via SH2 domain) with PDGFRB (tyrosine phosphorylated). Interacts with the inactive form of EIF2AK2/PKR. Interacts with PTPN1. Interacts with INSR/insulin receptor (in response to insulin stimulation); this interaction may mediate PTPN1 recruitment leading to INSR dephosphorylation. Interacts with CD3E (via Proline-rich sequence); the interaction is ligand dependent but independent of tyrosine kinase activation. Interacts with EGFR. Interacts with IRS1. Phosphorylated on Ser and Tyr residues. Phosphorylated in response to activation of EGFR and FcERI. Phosphorylated by activated PDGFRB.

Its subcellular location is the cytoplasm. The protein localises to the endoplasmic reticulum. The protein resides in the nucleus. Functionally, adapter protein which associates with tyrosine-phosphorylated growth factor receptors, such as KDR and PDGFRB, or their cellular substrates. Maintains low levels of EIF2S1 phosphorylation by promoting its dephosphorylation by PP1. Plays a role in the DNA damage response, not in the detection of the damage by ATM/ATR, but for efficient activation of downstream effectors, such as that of CHEK2. Plays a role in ELK1-dependent transcriptional activation in response to activated Ras signaling. Modulates the activation of EIF2AK2/PKR by dsRNA. May play a role in cell adhesion and migration through interaction with ephrin receptors. Also acts as an adpater protein for the T cell receptor complex (TCR-CD3E). Upon ligand engagement, is recruited by CD3E and promotes maturation of the immune synapse and T cell activation. This is SH2/SH3 adapter protein Nck1 (Nck1) from Mus musculus (Mouse).